We begin with the raw amino-acid sequence, 55 residues long: Small ribosomal subunit protein uS14 (55 aa).

The interval 1–20 is disordered; that stretch reads MSFEPSGPHSHRKPFGKGSR. Zn(2+) contacts are provided by cysteine 22, cysteine 25, cysteine 38, and cysteine 41.

It belongs to the universal ribosomal protein uS14 family. It depends on Zn(2+) as a cofactor.

This Encephalitozoon cuniculi (strain GB-M1) (Microsporidian parasite) protein is Small ribosomal subunit protein uS14 (RPS29).